The sequence spans 708 residues: Leukotoxin translocation ATP-binding protein LktB (708 aa).

Positions 1–126 constitute a Peptidase C39 domain; it reads MEANHQRNDL…ACYQGQLILV (126 aa). The 283-residue stretch at 155–437 folds into the ABC transmembrane type-1 domain; the sequence is FLETLIVSIF…LAQLWQDFQQ (283 aa). A run of 5 helical transmembrane segments spans residues 159 to 179, 192 to 212, 270 to 290, 296 to 316, and 389 to 409; these read LIVS…FQVV, LNII…LSGL, ALTS…MWYY, LVIL…SPIL, and VMVI…LSIG. In terms of domain architecture, ABC transporter spans 469 to 704; it reads ISFKNIRFRY…SNGLYSYLHQ (236 aa). Position 503–510 (503–510) interacts with ATP; it reads GRSGSGKS.

This sequence belongs to the ABC transporter superfamily. Protein-1 exporter (TC 3.A.1.109) family. In terms of assembly, homodimer.

It is found in the cell inner membrane. It catalyses the reaction ATP + H2O + proteinSide 1 = ADP + phosphate + proteinSide 2.. Functionally, part of the ABC transporter complex LktBD involved in leukotoxin export. Transmembrane domains (TMD) form a pore in the inner membrane and the ATP-binding domain (NBD) is responsible for energy generation. The chain is Leukotoxin translocation ATP-binding protein LktB (lktB) from Mannheimia haemolytica (Pasteurella haemolytica).